We begin with the raw amino-acid sequence, 249 residues long: Probable transcriptional regulatory protein ACIAD2052 (249 aa).

The protein belongs to the TACO1 family.

The protein localises to the cytoplasm. The protein is Probable transcriptional regulatory protein ACIAD2052 of Acinetobacter baylyi (strain ATCC 33305 / BD413 / ADP1).